A 649-amino-acid chain; its full sequence is ENTH domain-containing protein C19F8.03c (649 aa).

One can recognise an ENTH domain in the interval 2–136 (SPSKWLLTYE…VDYAQVGDAP (135 aa)). Disordered stretches follow at residues 280 to 382 (YLQN…NELE), 409 to 440 (LSAEGTSASPSLDKKSESTNIVQPIPSHPNDS), and 590 to 649 (FTHG…PFRS). Phosphoserine is present on residues Ser-285 and Ser-287. Residues 299-308 (PTLRKKKSIP) are compositionally biased toward basic residues. 2 stretches are compositionally biased toward polar residues: residues 313 to 326 (ESSSTIQKENTVQQ) and 340 to 349 (PETQRTTSRI). Positions 352-381 (QEEEIKEEEMEGEEEEEEEEVPNYESENEL) are enriched in acidic residues. 3 stretches are compositionally biased toward polar residues: residues 409–418 (LSAEGTSASP), 614–624 (TPYTASKNPFS), and 635–649 (ARNSISTESKNPFRS). The residue at position 414 (Thr-414) is a Phosphothreonine. A Phosphoserine modification is found at Ser-417.

It localises to the cytoplasm. This is ENTH domain-containing protein C19F8.03c from Schizosaccharomyces pombe (strain 972 / ATCC 24843) (Fission yeast).